Consider the following 717-residue polypeptide: Patatin-like phospholipase domain-containing protein PGUG_03164 (717 aa).

The helical transmembrane segment at 123–143 threads the bilayer; that stretch reads WPFLIIITVWILLLCILYTVV. The PNPLA domain maps to 298–490; the sequence is LCLSGGACFA…RTDIPIDALK (193 aa). The GXSXG signature appears at 329–333; it reads GTSGG. The active-site Nucleophile is the S331. D477 serves as the catalytic Proton acceptor. Positions 680–717 are disordered; that stretch reads YDSESSAEETLSPGFSQGTHAVLTDESDDDSSDDEIDD. Positions 704-717 are enriched in acidic residues; it reads DESDDDSSDDEIDD.

Belongs to the PLPL family.

It localises to the membrane. Its function is as follows. Probable lipid hydrolase. The sequence is that of Patatin-like phospholipase domain-containing protein PGUG_03164 from Meyerozyma guilliermondii (strain ATCC 6260 / CBS 566 / DSM 6381 / JCM 1539 / NBRC 10279 / NRRL Y-324) (Yeast).